Here is a 571-residue protein sequence, read N- to C-terminus: Fumarate reductase (cytochrome) (571 aa).

H8, C14, C17, H18, C36, C39, H40, H52, H58, H61, C68, C71, H72, A74, H75, C82, C85, H86, N91, and Y94 together coordinate heme c. The tract at residues 118 to 571 (ALASAPHDTV…EEAAKYSKKN (454 aa)) is flavoprotein-like. 9 residues coordinate FAD: A137, E156, N164, A165, A169, G170, G171, G278, and Q338. Residue G170 participates in succinate binding. Succinate contacts are provided by H365, T377, and E378. Residues T377, E378, and R402 each coordinate fumarate. The Proton donor role is filled by R402. K431 contributes to the heme c binding site. H504 lines the succinate pocket. H504 is a fumarate binding site. FAD contacts are provided by H505 and E534. Succinate-binding residues include R544 and G547. Fumarate-binding residues include R544 and G547. Residues A549 and I550 each coordinate FAD.

In terms of assembly, monomer. The cofactor is FAD. Heme c is required as a cofactor.

It is found in the periplasm. The catalysed reaction is 2 Fe(III)-[cytochrome c] + succinate = fumarate + 2 Fe(II)-[cytochrome c] + 2 H(+). In terms of biological role, flavocytochrome that catalyzes the reduction of fumarate to succinate. Is essential for fumarate respiration during anaerobic growth, acting as the terminal reductase. Receives electrons from the membrane-bound tetraheme c-type cytochrome CymA. In vitro, can use the artificial electron donor methyl viologen. In Shewanella frigidimarina, this protein is Fumarate reductase (cytochrome) (fccA).